We begin with the raw amino-acid sequence, 459 residues long: 1,3-beta-glucanosyltransferase gas2 (459 aa).

The first 19 residues, 1–19, serve as a signal peptide directing secretion; sequence MVSFTKFTLQLLSASAAFA. N-linked (GlcNAc...) asparagine glycans are attached at residues asparagine 34 and asparagine 68. The cysteines at positions 69 and 98 are disulfide-linked. Tyrosine 87 is a binding site for (1,3-beta-D-glucosyl)n. Residues asparagine 90, asparagine 104, and asparagine 146 are each glycosylated (N-linked (GlcNAc...) asparagine). (1,3-beta-D-glucosyl)n is bound by residues asparagine 155 and glutamate 156. The Proton donor role is filled by glutamate 156. An N-linked (GlcNAc...) asparagine glycan is attached at asparagine 160. The (1,3-beta-D-glucosyl)n site is built by aspartate 197 and arginine 202. 2 disulfide bridges follow: cysteine 211–cysteine 350 and cysteine 235–cysteine 266. Asparagine 212, asparagine 218, and asparagine 254 each carry an N-linked (GlcNAc...) asparagine glycan. Glutamate 263 functions as the Nucleophile in the catalytic mechanism. N-linked (GlcNAc...) asparagine glycosylation is present at asparagine 284. Residue tyrosine 295 coordinates (1,3-beta-D-glucosyl)n. Asparagine 308, asparagine 334, asparagine 344, asparagine 354, and asparagine 370 each carry an N-linked (GlcNAc...) asparagine glycan. 3 cysteine pairs are disulfide-bonded: cysteine 374/cysteine 427, cysteine 383/cysteine 449, and cysteine 402/cysteine 409. N-linked (GlcNAc...) asparagine glycosylation occurs at asparagine 423.

It belongs to the glycosyl hydrolase 72 family.

The protein localises to the endoplasmic reticulum lumen. It is found in the secreted. Its function is as follows. Splits internally a 1,3-beta-glucan molecule and transfers the newly generated reducing end (the donor) to the non-reducing end of another 1,3-beta-glucan molecule (the acceptor) forming a 1,3-beta linkage, resulting in the elongation of 1,3-beta-glucan chains in the cell wall. This is 1,3-beta-glucanosyltransferase gas2 (gas2) from Schizosaccharomyces pombe (strain 972 / ATCC 24843) (Fission yeast).